We begin with the raw amino-acid sequence, 361 residues long: Innexin inx1 (361 aa).

Residues 1–28 (MYKLLGGLKEYLKWQDIVTDNAIFRLHN) are Cytoplasmic-facing. Residues 29–49 (LFTTVLLLTCSLIITATQYVG) traverse the membrane as a helical segment. Residues 50 to 109 (NPIHCIVNGLPVRPINTYCWITSTFTMPDAFLRQVGSEVAHPGVANDFGDEDAKKYYTYY) lie on the Extracellular side of the membrane. A helical transmembrane segment spans residues 110-130 (QWVCFVLFFQAMLCYTPKWIW). The Cytoplasmic portion of the chain corresponds to 131-181 (DSIEGGLLRTLIMGLNRGLCQDDEKCMKKKALIEYLLRHIKRHNMYALKYW). A helical transmembrane segment spans residues 182 to 202 (FCETLCLVNIIGQLYLMNHFF). Over 203–267 (DGEFFSYGLR…LPLNIVNEKT (65 aa)) the chain is Extracellular. A helical transmembrane segment spans residues 268 to 288 (YIFLWFWYIILAALLSVLVVY). Residues 289–361 (RAVILAVPSV…KIETPSSNNP (73 aa)) lie on the Cytoplasmic side of the membrane.

Belongs to the pannexin family. As to expression, expressed in embryonic neural precursors including the dorsal median neuroblast, glial cells, neuropilar glial ring, developing myoblasts cells and in a circumferential band of epithelial cells at the trochanter/coxa boundary stripe in the developing limb.

Its subcellular location is the cell membrane. It is found in the cell junction. The protein localises to the gap junction. Structural components of the gap junctions. The polypeptide is Innexin inx1 (inx1) (Schistocerca americana (American grasshopper)).